Reading from the N-terminus, the 181-residue chain is Oligoribonuclease (181 aa).

The region spanning 8 to 171 (LIWIDLEMTG…DDIRESIAEL (164 aa)) is the Exonuclease domain. Residue tyrosine 129 is part of the active site.

It belongs to the oligoribonuclease family.

The protein resides in the cytoplasm. Its function is as follows. 3'-to-5' exoribonuclease specific for small oligoribonucleotides. In Alcanivorax borkumensis (strain ATCC 700651 / DSM 11573 / NCIMB 13689 / SK2), this protein is Oligoribonuclease.